A 147-amino-acid chain; its full sequence is Cytochrome c oxidase subunit 3 (147 aa).

A run of 4 helical transmembrane segments spans residues 13-33, 48-68, 83-103, and 125-145; these read FQIPLLNTIILISSGVSVTWA, GLFITIILGIYFTILQAYEYF, FFMATGFHGLHVIIGTLFLLI, and AWYWHFVDVVWLFLYISIYWW.

The protein belongs to the cytochrome c oxidase subunit 3 family. Component of the cytochrome c oxidase (complex IV, CIV), a multisubunit enzyme composed of a catalytic core of 3 subunits and several supernumerary subunits. The complex exists as a monomer or a dimer and forms supercomplexes (SCs) in the inner mitochondrial membrane with ubiquinol-cytochrome c oxidoreductase (cytochrome b-c1 complex, complex III, CIII).

It localises to the mitochondrion inner membrane. It carries out the reaction 4 Fe(II)-[cytochrome c] + O2 + 8 H(+)(in) = 4 Fe(III)-[cytochrome c] + 2 H2O + 4 H(+)(out). Functionally, component of the cytochrome c oxidase, the last enzyme in the mitochondrial electron transport chain which drives oxidative phosphorylation. The respiratory chain contains 3 multisubunit complexes succinate dehydrogenase (complex II, CII), ubiquinol-cytochrome c oxidoreductase (cytochrome b-c1 complex, complex III, CIII) and cytochrome c oxidase (complex IV, CIV), that cooperate to transfer electrons derived from NADH and succinate to molecular oxygen, creating an electrochemical gradient over the inner membrane that drives transmembrane transport and the ATP synthase. Cytochrome c oxidase is the component of the respiratory chain that catalyzes the reduction of oxygen to water. Electrons originating from reduced cytochrome c in the intermembrane space (IMS) are transferred via the dinuclear copper A center (CU(A)) of subunit 2 and heme A of subunit 1 to the active site in subunit 1, a binuclear center (BNC) formed by heme A3 and copper B (CU(B)). The BNC reduces molecular oxygen to 2 water molecules using 4 electrons from cytochrome c in the IMS and 4 protons from the mitochondrial matrix. The chain is Cytochrome c oxidase subunit 3 (COIII) from Spodoptera frugiperda (Fall armyworm).